Here is a 278-residue protein sequence, read N- to C-terminus: Tropomyosin A (278 aa).

A coiled-coil region spans residues 1 to 270; that stretch reads IMMAMKLEKE…YRAISGELDT (270 aa). Residues 92 to 134 form a disordered region; it reads DFEQSSGRLTETSTKLDDASKAAEESERNRKTLETRSISDDER. Positions 95–104 are enriched in polar residues; sequence QSSGRLTETS. A compositionally biased stretch (basic and acidic residues) spans 105–134; the sequence is TKLDDASKAAEESERNRKTLETRSISDDER.

The protein belongs to the tropomyosin family. Homodimer.

In terms of biological role, tropomyosin, in association with the troponin complex, plays a central role in the calcium dependent regulation of muscle contraction. The chain is Tropomyosin A from Echinococcus granulosus (Hydatid tapeworm).